The sequence spans 66 residues: Omega conotoxin-CVIE (66 aa).

An N-terminal signal peptide occupies residues 1-17 (VVIVAVLLLTACQLITA). Residues 18–40 (NDSRGTQKHRALRSDTKLSMSTR) constitute a propeptide that is removed on maturation. 3 disulfides stabilise this stretch: cysteine 41/cysteine 56, cysteine 48/cysteine 60, and cysteine 55/cysteine 65. Residue cysteine 65 is modified to Cysteine amide.

It belongs to the conotoxin O1 superfamily. As to expression, expressed by the venom duct.

It is found in the secreted. Its function is as follows. Omega-conotoxins act at presynaptic membranes, they bind and block voltage-gated calcium channels. This toxin blocks N-type calcium channels (Cav2.2/CACNA1B). It shows a higher potency when Cav2.2/CACNA1B is only expressed with the ancillary subunit CACNB3 (IC(50)=0.12 nM) than on Cav2.2/CACNA1B expressed with the ancillary subunits CACNA2D1 and CACNB3 (IC(50)=2.6 nM). The Cav2.2/CACNA1B block by this toxin is voltage-independent, whereas the recovery from toxin block is voltage-dependent. There is a low recovery at physiological membrane potential and a high recovery with hyperpolarized potential. This indicates that the toxin has a higher affinity for Cav2.2/CACNA1B in the inactivated state. It is noteworthy that ancillary subunits beta modulate recovery from this toxin block. Cav2.2/CACNA1B expressed with the ancillary subunit CACNB2a (isoform 2a) almost recover completely from this toxin block, whereas Cav2.2/CACNA1B expressed with CACNB3 exhibits relatively weak recovery. Inhibition by this toxin of excitatory synaptic transmission is reversible. In vivo, when tested on rat model of persistent pain, this toxin blocks chronic pain behavior. This chain is Omega conotoxin-CVIE, found in Conus catus (Cat cone).